The following is an 80-amino-acid chain: Trefoil factor 3 (80 aa).

Residues 1 to 21 (MEARMFWLLVVLLALASSSSA) form the signal peptide. A P-type domain is found at 30 to 73 (NQCAVPAKDRVDCGYPQVTPEQCNNRGCCFDSSIXGVPWCFKPL). Cystine bridges form between cysteine 32–cysteine 58, cysteine 42–cysteine 57, and cysteine 52–cysteine 69.

As to quaternary structure, monomer. Homodimer; disulfide-linked.

The protein resides in the secreted. Its subcellular location is the extracellular space. It is found in the extracellular matrix. It localises to the cytoplasm. Its function is as follows. Involved in the maintenance and repair of the intestinal mucosa. Promotes the mobility of epithelial cells in healing processes (motogen). The polypeptide is Trefoil factor 3 (TFF3) (Sus scrofa (Pig)).